Here is a 403-residue protein sequence, read N- to C-terminus: Beta-galactoside alpha-2,6-sialyltransferase 1 (403 aa).

At 1 to 9 the chain is on the cytoplasmic side; that stretch reads MIHTNLKRK. Residues 10–26 form a helical; Signal-anchor for type II membrane protein membrane-spanning segment; it reads FSCFVLVFLLFAIICVW. The Lumenal portion of the chain corresponds to 27–403; sequence KKGSDYEALT…TLSGFRNNRC (377 aa). Disulfide bonds link Cys139-Cys403, Cys181-Cys332, and Cys350-Cys361. 2 N-linked (GlcNAc...) asparagine glycosylation sites follow: Asn146 and Asn158. Residues Ser186, Asn209, Asn230, 319–321, Cys350, Tyr351, Thr362, Tyr366, His367, and Lys373 each bind substrate; that span reads SSG. Tyr366 bears the Phosphotyrosine mark.

This sequence belongs to the glycosyltransferase 29 family. Monomer and homodimer. In terms of processing, N-glycosylated.

Its subcellular location is the golgi apparatus. It localises to the golgi stack membrane. The protein resides in the secreted. It carries out the reaction a beta-D-galactoside + CMP-N-acetyl-beta-neuraminate = an N-acetyl-alpha-neuraminyl-(2-&gt;6)-beta-D-galactosyl derivative + CMP + H(+). It participates in protein modification; protein glycosylation. Functionally, transfers sialic acid from CMP-sialic acid to galactose-containing acceptor substrates. In Mus musculus (Mouse), this protein is Beta-galactoside alpha-2,6-sialyltransferase 1 (St6gal1).